A 354-amino-acid chain; its full sequence is Peptide chain release factor 1 (354 aa).

The residue at position 230 (glutamine 230) is an N5-methylglutamine. The tract at residues 282-301 (KQASDAIKKQMIGSGDRSER) is disordered.

This sequence belongs to the prokaryotic/mitochondrial release factor family. Post-translationally, methylated by PrmC. Methylation increases the termination efficiency of RF1.

It is found in the cytoplasm. Functionally, peptide chain release factor 1 directs the termination of translation in response to the peptide chain termination codons UAG and UAA. This Leptospira borgpetersenii serovar Hardjo-bovis (strain L550) protein is Peptide chain release factor 1.